Consider the following 258-residue polypeptide: Phosphate import ATP-binding protein PstB (258 aa).

Residues I5–K247 form the ABC transporter domain. G37 to S44 serves as a coordination point for ATP.

This sequence belongs to the ABC transporter superfamily. Phosphate importer (TC 3.A.1.7) family. As to quaternary structure, the complex is composed of two ATP-binding proteins (PstB), two transmembrane proteins (PstC and PstA) and a solute-binding protein (PstS).

Its subcellular location is the cell membrane. It carries out the reaction phosphate(out) + ATP + H2O = ADP + 2 phosphate(in) + H(+). Part of the ABC transporter complex PstSACB involved in phosphate import. Responsible for energy coupling to the transport system. In Cutibacterium acnes (strain DSM 16379 / KPA171202) (Propionibacterium acnes), this protein is Phosphate import ATP-binding protein PstB.